A 122-amino-acid polypeptide reads, in one-letter code: Large ribosomal subunit protein uL14 (122 aa).

This sequence belongs to the universal ribosomal protein uL14 family. In terms of assembly, part of the 50S ribosomal subunit. Forms a cluster with proteins L3 and L19. In the 70S ribosome, L14 and L19 interact and together make contacts with the 16S rRNA in bridges B5 and B8.

Functionally, binds to 23S rRNA. Forms part of two intersubunit bridges in the 70S ribosome. This is Large ribosomal subunit protein uL14 from Flavobacterium johnsoniae (strain ATCC 17061 / DSM 2064 / JCM 8514 / BCRC 14874 / CCUG 350202 / NBRC 14942 / NCIMB 11054 / UW101) (Cytophaga johnsonae).